The primary structure comprises 267 residues: Undecaprenyl-diphosphatase (267 aa).

A run of 8 helical transmembrane segments spans residues 1-21 (MSYF…FLPI), 39-59 (QGLA…VLYF), 83-103 (AKLA…GFVM), 111-131 (LRSA…LWYV), 149-169 (ALFI…RSGA), 189-209 (FLMS…KLVT), 218-238 (FLLT…HFFL), and 245-265 (GMTP…AFLL).

Belongs to the UppP family.

It localises to the cell inner membrane. The catalysed reaction is di-trans,octa-cis-undecaprenyl diphosphate + H2O = di-trans,octa-cis-undecaprenyl phosphate + phosphate + H(+). In terms of biological role, catalyzes the dephosphorylation of undecaprenyl diphosphate (UPP). Confers resistance to bacitracin. This chain is Undecaprenyl-diphosphatase, found in Vibrio cholerae serotype O1 (strain ATCC 39315 / El Tor Inaba N16961).